The following is a 670-amino-acid chain: UvrABC system protein B (670 aa).

The region spanning 51–433 (DGLKKGEPFQ…SSRVVEQIIR (383 aa)) is the Helicase ATP-binding domain. 64–71 (GVTGSGKT) is an ATP binding site. Positions 117–140 (YYDYYQPESYLPAKDQYIEKDAMI) match the Beta-hairpin motif. Positions 453-612 (DVMQEIRKIV…IVPTTIRKPI (160 aa)) constitute a Helicase C-terminal domain. In terms of domain architecture, UVR spans 631–666 (PNVIIELDAEMREAADRLDFERAIQVRELIKKLEKE).

The protein belongs to the UvrB family. Forms a heterotetramer with UvrA during the search for lesions. Interacts with UvrC in an incision complex.

The protein localises to the cytoplasm. The UvrABC repair system catalyzes the recognition and processing of DNA lesions. A damage recognition complex composed of 2 UvrA and 2 UvrB subunits scans DNA for abnormalities. Upon binding of the UvrA(2)B(2) complex to a putative damaged site, the DNA wraps around one UvrB monomer. DNA wrap is dependent on ATP binding by UvrB and probably causes local melting of the DNA helix, facilitating insertion of UvrB beta-hairpin between the DNA strands. Then UvrB probes one DNA strand for the presence of a lesion. If a lesion is found the UvrA subunits dissociate and the UvrB-DNA preincision complex is formed. This complex is subsequently bound by UvrC and the second UvrB is released. If no lesion is found, the DNA wraps around the other UvrB subunit that will check the other stand for damage. The sequence is that of UvrABC system protein B from Methanosarcina mazei (strain ATCC BAA-159 / DSM 3647 / Goe1 / Go1 / JCM 11833 / OCM 88) (Methanosarcina frisia).